The chain runs to 744 residues: Glucosamine inositolphosphorylceramide transferase 1 (744 aa).

3 helical membrane passes run 31 to 51 (FLVA…WLVV), 378 to 398 (SLFG…VGFV), and 460 to 480 (LFFC…VHFL). Residues N534, 558–563 (NSLNNR), 579–581 (DDD), R609, and 665–669 (FNCED) contribute to the substrate site. Residue D581 participates in Mn(2+) binding. A disulfide bridge links C667 with C718. D669 is a catalytic residue.

This sequence belongs to the glycosyltransferase 64 family. It depends on Mn(2+) as a cofactor. Highly expressed in almost all tissues.

Its subcellular location is the membrane. The protein operates within sphingolipid metabolism. Functionally, essential protein. Glycosyltransferase that mediates the glycosylation of glycosylinositol phosphorylceramides (GIPCs), the major sphingolipids in the plasma membrane; acts as a HexN(Ac)-specific GIPC sugar transferase. Responsible for the glycosylation of a subgroup of GIPCs found in seeds and pollen that contain GlcNAc and GlcN (GlcN(Ac)). Maybe involved in the maintenance of cell-cell adhesion. This is Glucosamine inositolphosphorylceramide transferase 1 from Oryza sativa subsp. japonica (Rice).